Consider the following 299-residue polypeptide: Inosose dehydratase (299 aa).

Belongs to the IolE/MocC family. The cofactor is glutathione. Co(2+) serves as cofactor. It depends on Mn(2+) as a cofactor.

It catalyses the reaction scyllo-inosose = 3D-3,5/4-trihydroxycyclohexane-1,2-dione + H2O. Its function is as follows. Catalyzes the dehydration of inosose (2-keto-myo-inositol, 2KMI or 2,4,6/3,5-pentahydroxycyclohexanone) to 3D-(3,5/4)-trihydroxycyclohexane-1,2-dione (D-2,3-diketo-4-deoxy-epi-inositol). The chain is Inosose dehydratase from Klebsiella pneumoniae subsp. pneumoniae (strain ATCC 700721 / MGH 78578).